Consider the following 86-residue polypeptide: Large ribosomal subunit protein uL23 (86 aa).

The protein belongs to the universal ribosomal protein uL23 family. Part of the 50S ribosomal subunit. Contacts protein L29.

Functionally, binds to 23S rRNA. One of the proteins that surrounds the polypeptide exit tunnel on the outside of the ribosome. The sequence is that of Large ribosomal subunit protein uL23 from Thermococcus onnurineus (strain NA1).